The primary structure comprises 132 residues: Minor structural pilin EpdB (132 aa).

The propeptide occupies 1 to 4 (MSKG). A QXSXEXXXL motif is present at residues 9-19 (EFIVLFLALLV).

Post-translationally, the N-terminus is probably cleaved by the prepilin peptidase EppA, which recognizes the class III signal sequence.

Its subcellular location is the secreted. It is found in the cell surface. It localises to the fimbrium. Functionally, minor component of the type IV-like pili. Essential for pili formation. This is Minor structural pilin EpdB from Methanococcus maripaludis (strain DSM 14266 / JCM 13030 / NBRC 101832 / S2 / LL).